A 224-amino-acid polypeptide reads, in one-letter code: Large ribosomal subunit protein bL25 (224 aa).

The disordered stretch occupies residues 190–224 (EPAPAAEGAAPAEGAAAAAAGGKPAAKTAKPAAKK).

It belongs to the bacterial ribosomal protein bL25 family. CTC subfamily. As to quaternary structure, part of the 50S ribosomal subunit; part of the 5S rRNA/L5/L18/L25 subcomplex. Contacts the 5S rRNA. Binds to the 5S rRNA independently of L5 and L18.

Its function is as follows. This is one of the proteins that binds to the 5S RNA in the ribosome where it forms part of the central protuberance. This is Large ribosomal subunit protein bL25 from Variovorax paradoxus (strain S110).